The following is a 730-amino-acid chain: Ribosomal RNA large subunit methyltransferase K/L (730 aa).

The THUMP domain occupies threonine 46–leucine 157.

It belongs to the methyltransferase superfamily. RlmKL family.

Its subcellular location is the cytoplasm. The enzyme catalyses guanosine(2445) in 23S rRNA + S-adenosyl-L-methionine = N(2)-methylguanosine(2445) in 23S rRNA + S-adenosyl-L-homocysteine + H(+). It catalyses the reaction guanosine(2069) in 23S rRNA + S-adenosyl-L-methionine = N(2)-methylguanosine(2069) in 23S rRNA + S-adenosyl-L-homocysteine + H(+). Specifically methylates the guanine in position 2445 (m2G2445) and the guanine in position 2069 (m7G2069) of 23S rRNA. This Pseudomonas putida (strain W619) protein is Ribosomal RNA large subunit methyltransferase K/L.